We begin with the raw amino-acid sequence, 345 residues long: Acetylserotonin O-methyltransferase (345 aa).

S-adenosyl-L-methionine-binding positions include tyrosine 147, tryptophan 164, aspartate 210, 235–237 (GDF), and arginine 252. Histidine 255 functions as the Proton donor/acceptor in the catalytic mechanism. Residues aspartate 256, asparagine 302, and glutamine 306 each contribute to the substrate site.

This sequence belongs to the class I-like SAM-binding methyltransferase superfamily. Cation-independent O-methyltransferase family. In terms of assembly, homodimer. As to expression, expressed in the pineal gland (at protein level). Not detectable in retina, nor in liver.

It carries out the reaction N-acetylserotonin + S-adenosyl-L-methionine = melatonin + S-adenosyl-L-homocysteine + H(+). It participates in aromatic compound metabolism; melatonin biosynthesis; melatonin from serotonin: step 1/2. Its function is as follows. Catalyzes the transfer of a methyl group onto N-acetylserotonin, producing melatonin (N-acetyl-5-methoxytryptamine). The chain is Acetylserotonin O-methyltransferase (ASMT) from Bos taurus (Bovine).